Here is a 98-residue protein sequence, read N- to C-terminus: Acylphosphatase (98 aa).

Residues 12–98 (TYYVRVRGVV…ERRFERFQQQ (87 aa)) form the Acylphosphatase-like domain. Active-site residues include Arg27 and Asn45.

It belongs to the acylphosphatase family.

The catalysed reaction is an acyl phosphate + H2O = a carboxylate + phosphate + H(+). This is Acylphosphatase (acyP) from Burkholderia lata (strain ATCC 17760 / DSM 23089 / LMG 22485 / NCIMB 9086 / R18194 / 383).